We begin with the raw amino-acid sequence, 413 residues long: Serine hydroxymethyltransferase (413 aa).

(6S)-5,6,7,8-tetrahydrofolate contacts are provided by residues Leu117 and 121 to 123; that span reads GHL. Lys226 is subject to N6-(pyridoxal phosphate)lysine. Residue 349-351 coordinates (6S)-5,6,7,8-tetrahydrofolate; it reads SPF.

Belongs to the SHMT family. As to quaternary structure, homodimer. Requires pyridoxal 5'-phosphate as cofactor.

It is found in the cytoplasm. The catalysed reaction is (6R)-5,10-methylene-5,6,7,8-tetrahydrofolate + glycine + H2O = (6S)-5,6,7,8-tetrahydrofolate + L-serine. Its pathway is one-carbon metabolism; tetrahydrofolate interconversion. It functions in the pathway amino-acid biosynthesis; glycine biosynthesis; glycine from L-serine: step 1/1. Its function is as follows. Catalyzes the reversible interconversion of serine and glycine with tetrahydrofolate (THF) serving as the one-carbon carrier. This reaction serves as the major source of one-carbon groups required for the biosynthesis of purines, thymidylate, methionine, and other important biomolecules. Also exhibits THF-independent aldolase activity toward beta-hydroxyamino acids, producing glycine and aldehydes, via a retro-aldol mechanism. The polypeptide is Serine hydroxymethyltransferase (Listeria monocytogenes serovar 1/2a (strain ATCC BAA-679 / EGD-e)).